Here is a 205-residue protein sequence, read N- to C-terminus: Holliday junction branch migration complex subunit RuvA (205 aa).

The interval Met1 to Ile64 is domain I. The domain II stretch occupies residues Ser65–Glu143. A flexible linker region spans residues Arg144–Glu156. Positions Ala157 to Leu205 are domain III.

It belongs to the RuvA family. Homotetramer. Forms an RuvA(8)-RuvB(12)-Holliday junction (HJ) complex. HJ DNA is sandwiched between 2 RuvA tetramers; dsDNA enters through RuvA and exits via RuvB. An RuvB hexamer assembles on each DNA strand where it exits the tetramer. Each RuvB hexamer is contacted by two RuvA subunits (via domain III) on 2 adjacent RuvB subunits; this complex drives branch migration. In the full resolvosome a probable DNA-RuvA(4)-RuvB(12)-RuvC(2) complex forms which resolves the HJ.

It is found in the cytoplasm. The RuvA-RuvB-RuvC complex processes Holliday junction (HJ) DNA during genetic recombination and DNA repair, while the RuvA-RuvB complex plays an important role in the rescue of blocked DNA replication forks via replication fork reversal (RFR). RuvA specifically binds to HJ cruciform DNA, conferring on it an open structure. The RuvB hexamer acts as an ATP-dependent pump, pulling dsDNA into and through the RuvAB complex. HJ branch migration allows RuvC to scan DNA until it finds its consensus sequence, where it cleaves and resolves the cruciform DNA. This Shewanella halifaxensis (strain HAW-EB4) protein is Holliday junction branch migration complex subunit RuvA.